The chain runs to 126 residues: Alpha-lactalbumin (126 aa).

The 126-residue stretch at 1 to 126 (KVFEKCELSQ…CIADLDQWKC (126 aa)) folds into the C-type lysozyme domain. Intrachain disulfides connect Cys6/Cys126, Cys30/Cys117, Cys63/Cys82, and Cys78/Cys96. N-linked (GlcNAc...) asparagine glycosylation occurs at Asn47. Ca(2+) contacts are provided by Lys84, Asp87, Asp89, Asp92, and Asp93.

Belongs to the glycosyl hydrolase 22 family. In terms of assembly, lactose synthase (LS) is a heterodimer of a catalytic component, beta1,4-galactosyltransferase (beta4Gal-T1) and a regulatory component, alpha-lactalbumin (LA). As to expression, mammary gland specific. Secreted in milk.

It localises to the secreted. Functionally, regulatory subunit of lactose synthase, changes the substrate specificity of galactosyltransferase in the mammary gland making glucose a good acceptor substrate for this enzyme. This enables LS to synthesize lactose, the major carbohydrate component of milk. In other tissues, galactosyltransferase transfers galactose onto the N-acetylglucosamine of the oligosaccharide chains in glycoproteins. The sequence is that of Alpha-lactalbumin (LALBA) from Tachyglossus aculeatus aculeatus (Southeast Australian short-beaked echidna).